We begin with the raw amino-acid sequence, 473 residues long: 3-isopropylmalate dehydratase large subunit (473 aa).

3 residues coordinate [4Fe-4S] cluster: Cys351, Cys414, and Cys417.

Belongs to the aconitase/IPM isomerase family. LeuC type 1 subfamily. Heterodimer of LeuC and LeuD. [4Fe-4S] cluster serves as cofactor.

The catalysed reaction is (2R,3S)-3-isopropylmalate = (2S)-2-isopropylmalate. The protein operates within amino-acid biosynthesis; L-leucine biosynthesis; L-leucine from 3-methyl-2-oxobutanoate: step 2/4. In terms of biological role, catalyzes the isomerization between 2-isopropylmalate and 3-isopropylmalate, via the formation of 2-isopropylmaleate. The sequence is that of 3-isopropylmalate dehydratase large subunit from Acidovorax sp. (strain JS42).